The primary structure comprises 748 residues: Semaphorin-3B (748 aa).

Positions 1 to 25 are cleaved as a signal peptide; sequence MGRAEAAAMIPGLALLWVAGLGDTA. Positions 30-512 constitute a Sema domain; it reads RLRLSFQELQ…SRSAVAQIAL (483 aa). N-linked (GlcNAc...) asparagine glycosylation is present at N82. A disulfide bridge links C102 with C113. N124 carries an N-linked (GlcNAc...) asparagine glycan. 5 disulfides stabilise this stretch: C131/C140, C268/C379, C292/C339, C515/C533, and C643/C709. Residues 561 to 659 form the Ig-like C2-type domain; it reads PSTLCSGDSS…FSQPLRRLVL (99 aa). Residues 708-748 form a disordered region; that stretch reads MCRPQPGHHSVAADSRRKGRNRRMHVSELRAERGPRSAAHW. Residues 732–742 show a composition bias toward basic and acidic residues; sequence HVSELRAERGP.

It belongs to the semaphorin family.

Its subcellular location is the secreted. Functionally, inhibits axonal extension by providing local signals to specify territories inaccessible for growing axons. The chain is Semaphorin-3B (Sema3b) from Mus musculus (Mouse).